We begin with the raw amino-acid sequence, 482 residues long: Transcription initiation factor IIE subunit alpha (482 aa).

The region spanning 9–99 (VKNLLKFVVR…KYPHAIDAIK (91 aa)) is the HTH TFE/IIEalpha-type domain. The segment at 124 to 152 (CPICLTKYTQLEAVQLLNFDRTEFLCSLC) adopts a C4-type zinc-finger fold. The span at 274 to 286 (RELQERQAEEKRK) shows a compositional bias: basic and acidic residues. 2 disordered regions span residues 274–295 (RELQ…EWHK) and 321–482 (AMDS…FEDV). The span at 321-345 (AMDSINPDNEPAQETSYQNNRTLTE) shows a compositional bias: polar residues. A compositionally biased stretch (acidic residues) spans 374–401 (EEEEEEEEEEDEEEEEEEEMEDVMDDND). Polar residues predominate over residues 419–432 (TAGTAKTESNTSND). The segment covering 433–444 (VKQESINDKTED) has biased composition (basic and acidic residues). Acidic residues predominate over residues 464–482 (GDDDDDDDDDEMDIEFEDV).

Belongs to the TFIIE alpha subunit family. As to quaternary structure, TFIIE is a tetramer of two alpha (TFA1) and two beta (TFA2) subunits.

It localises to the nucleus. In terms of biological role, recruits TFIIH to the initiation complex and stimulates the RNA polymerase II C-terminal domain kinase and DNA-dependent ATPase activities of TFIIH. Both TFIIH and TFIIE are required for promoter clearance by RNA polymerase. The sequence is that of Transcription initiation factor IIE subunit alpha (TFA1) from Saccharomyces cerevisiae (strain ATCC 204508 / S288c) (Baker's yeast).